Reading from the N-terminus, the 605-residue chain is Condensin-2 complex subunit H2 (605 aa).

At Thr-19 the chain carries Phosphothreonine. Ser-95, Ser-200, Ser-208, Ser-228, and Ser-232 each carry phosphoserine. A disordered region spans residues Leu-194–Phe-331. Acidic residues predominate over residues Gly-256–Glu-266. Residues Ser-282, Ser-284, Ser-466, and Ser-492 each carry the phosphoserine modification.

The protein belongs to the CND2 H2 (condensin-2 subunit 2) family. As to quaternary structure, component of the condensin-2 complex, which contains the SMC2 and SMC4 heterodimer, and three non SMC subunits, NCAPG2, NCAPH2 and NCAPD3 that probably regulate the complex.

The protein localises to the nucleus. It is found in the chromosome. Regulatory subunit of the condensin-2 complex, a complex that seems to provide chromosomes with an additional level of organization and rigidity and in establishing mitotic chromosome architecture. May promote the resolution of double-strand DNA catenanes (intertwines) between sister chromatids. Condensin-mediated compaction likely increases tension in catenated sister chromatids, providing directionality for type II topoisomerase-mediated strand exchanges toward chromatid decatenation. Required for decatenation of chromatin bridges at anaphase. Early in neurogenesis, may play an essential role to ensure accurate mitotic chromosome condensation in neuron stem cells, ultimately affecting neuron pool and cortex size. Seems to have lineage-specific role in T-cell development. The chain is Condensin-2 complex subunit H2 (NCAPH2) from Homo sapiens (Human).